The following is a 358-amino-acid chain: UPF0324 membrane protein CT0845 (358 aa).

10 helical membrane passes run 36–53 (YFPG…ATFL), 57–76 (YGAP…RFLS), 83–105 (LVGI…GMRI), 115–134 (VKPV…FGLA), 146–168 (GVLT…AAVL), 178–200 (TIFT…PVVA), 244–261 (LLRV…SLIF), 276–295 (LLPP…SLGV), 307–325 (VSRW…KTSL), and 335–357 (PVSI…VVWM).

Belongs to the UPF0324 family.

It localises to the cell membrane. The protein is UPF0324 membrane protein CT0845 of Chlorobaculum tepidum (strain ATCC 49652 / DSM 12025 / NBRC 103806 / TLS) (Chlorobium tepidum).